Here is a 277-residue protein sequence, read N- to C-terminus: Diaminopimelate epimerase (277 aa).

Substrate is bound by residues asparagine 13, glutamine 46, and asparagine 66. Cysteine 75 functions as the Proton donor in the catalytic mechanism. Substrate is bound by residues 76–77, asparagine 160, asparagine 193, and 211–212; these read GN and ER. Catalysis depends on cysteine 220, which acts as the Proton acceptor. 221 to 222 is a binding site for substrate; sequence GS.

It belongs to the diaminopimelate epimerase family. Homodimer.

It is found in the cytoplasm. It carries out the reaction (2S,6S)-2,6-diaminopimelate = meso-2,6-diaminopimelate. It functions in the pathway amino-acid biosynthesis; L-lysine biosynthesis via DAP pathway; DL-2,6-diaminopimelate from LL-2,6-diaminopimelate: step 1/1. Its function is as follows. Catalyzes the stereoinversion of LL-2,6-diaminopimelate (L,L-DAP) to meso-diaminopimelate (meso-DAP), a precursor of L-lysine and an essential component of the bacterial peptidoglycan. The protein is Diaminopimelate epimerase of Legionella pneumophila (strain Lens).